A 342-amino-acid polypeptide reads, in one-letter code: N-acetyl-gamma-glutamyl-phosphate reductase (342 aa).

Residue Cys149 is part of the active site.

It belongs to the NAGSA dehydrogenase family. Type 1 subfamily.

It is found in the cytoplasm. The enzyme catalyses N-acetyl-L-glutamate 5-semialdehyde + phosphate + NADP(+) = N-acetyl-L-glutamyl 5-phosphate + NADPH + H(+). It functions in the pathway amino-acid biosynthesis; L-arginine biosynthesis; N(2)-acetyl-L-ornithine from L-glutamate: step 3/4. Functionally, catalyzes the NADPH-dependent reduction of N-acetyl-5-glutamyl phosphate to yield N-acetyl-L-glutamate 5-semialdehyde. The sequence is that of N-acetyl-gamma-glutamyl-phosphate reductase from Paracoccus denitrificans (strain Pd 1222).